The following is a 338-amino-acid chain: MTKLPKLLLGLTFSVSLIPFSSLLITSTDVNKQPVPTALQRTGASAIHEGSFQTITLGQSLMEQIEQLQQFTPAQRFTQFKKKFPNQKLLSQSELSPVDVYNFLSGWQDALVSFLDRVIKLQGKVKEANEIFNPNVGDQIVLPKKENPNVLEVLGEYNGFGFFPTLGKNGLNLPQQIFENFTDFKVESYQINDFKVSLVGERDIIKNDKVRFSYAVQIPLNLELLVNNQKVTFNITVDLRTNNFSTQETFNDLFNNGTAPTNWQFFSRIKVNKLHYDQTDATHLANTLLQDQFNALNLDLQKSIYDLNLDDLEERFEEEYAKPLREKRTQQKKEWEEE.

The protein belongs to the MG032/MG096/MG288 family.

This is an uncharacterized protein from Mycoplasma pneumoniae (strain ATCC 29342 / M129 / Subtype 1) (Mycoplasmoides pneumoniae).